Reading from the N-terminus, the 124-residue chain is uncharacterized protein (124 aa).

In terms of assembly, interacts with dil1.

This is an uncharacterized protein from Schizosaccharomyces pombe (strain 972 / ATCC 24843) (Fission yeast).